The primary structure comprises 200 residues: dITP/XTP pyrophosphatase (200 aa).

Residue 8–13 participates in substrate binding; that stretch reads TGNQGK. The active-site Proton acceptor is aspartate 69. Residue aspartate 69 coordinates Mg(2+). Substrate is bound by residues serine 70, 154-157, lysine 177, and 182-183; these read FGYD and HR.

It belongs to the HAM1 NTPase family. In terms of assembly, homodimer. Mg(2+) serves as cofactor.

The enzyme catalyses XTP + H2O = XMP + diphosphate + H(+). The catalysed reaction is dITP + H2O = dIMP + diphosphate + H(+). It catalyses the reaction ITP + H2O = IMP + diphosphate + H(+). In terms of biological role, pyrophosphatase that catalyzes the hydrolysis of nucleoside triphosphates to their monophosphate derivatives, with a high preference for the non-canonical purine nucleotides XTP (xanthosine triphosphate), dITP (deoxyinosine triphosphate) and ITP. Seems to function as a house-cleaning enzyme that removes non-canonical purine nucleotides from the nucleotide pool, thus preventing their incorporation into DNA/RNA and avoiding chromosomal lesions. In Vibrio parahaemolyticus serotype O3:K6 (strain RIMD 2210633), this protein is dITP/XTP pyrophosphatase.